The chain runs to 107 residues: MVNFNQFLKQAQSMQKKMQEAQEQMANARYTGKAGGGLVEVIATGKGEVEKISIDESLLKAEEKEMLEDLIKVAFNNAQQKCDEDSQNSLSGALNGMRLPPGFKMPF.

The protein belongs to the YbaB/EbfC family. In terms of assembly, homodimer.

The protein localises to the cytoplasm. Its subcellular location is the nucleoid. Binds to DNA and alters its conformation. May be involved in regulation of gene expression, nucleoid organization and DNA protection. The sequence is that of Nucleoid-associated protein A1G_07310 from Rickettsia rickettsii (strain Sheila Smith).